A 639-amino-acid polypeptide reads, in one-letter code: Synaptotagmin-16 (639 aa).

Over residues 95–119 (NSDLQDSVQTASPTLGQQAEDSSSV) the composition is skewed to polar residues. Residues 95–191 (NSDLQDSVQT…SSESDEDVTK (97 aa)) form a disordered region. The segment covering 121 to 134 (PPWPSKIPGAPKPQ) has biased composition (pro residues). Residues 142–151 (EEDHHSERQR) are compositionally biased toward basic and acidic residues. Acidic residues predominate over residues 174–187 (GDDEEPSTSSESDE). Residues 344–463 (KCGDLDVIFE…HPEGEMKVTL (120 aa)) form the C2 1 domain. The tract at residues 470–496 (NLSSGESPLSPSVVSHSDSASSTQSLS) is disordered. Positions 476-496 (SPLSPSVVSHSDSASSTQSLS) are enriched in low complexity. A C2 2 domain is found at 499 to 634 (GVPELLVGLS…SKGQQTCRWH (136 aa)).

Belongs to the synaptotagmin family. In terms of assembly, homodimer. Can also form heterodimers. As to expression, highly expressed in heart and testis. Moderately expressed in kidney.

In terms of biological role, may be involved in the trafficking and exocytosis of secretory vesicles in non-neuronal tissues. Is Ca(2+)-independent. This Mus musculus (Mouse) protein is Synaptotagmin-16 (Syt16).